Reading from the N-terminus, the 290-residue chain is Nucleoid occlusion protein (290 aa).

The H-T-H motif DNA-binding region spans glutamate 153–leucine 172.

This sequence belongs to the ParB family.

The protein localises to the cytoplasm. The protein resides in the nucleoid. In terms of biological role, effects nucleoid occlusion by binding relatively nonspecifically to DNA and preventing the assembly of the division machinery in the vicinity of the nucleoid, especially under conditions that disturb the cell cycle. It helps to coordinate cell division and chromosome segregation by preventing the formation of the Z ring through the nucleoid, which would cause chromosome breakage. In Bacillus cereus (strain AH187), this protein is Nucleoid occlusion protein.